We begin with the raw amino-acid sequence, 693 residues long: DNA ligase (693 aa).

NAD(+)-binding positions include 43-47, 92-93, and Glu123; these read DEEYD and SL. The active-site N6-AMP-lysine intermediate is the Lys125. Residues Arg146, Glu180, Lys296, and Lys320 each coordinate NAD(+). The Zn(2+) site is built by Cys414, Cys417, Cys433, and Cys438. Positions 595-684 constitute a BRCT domain; the sequence is VKYDVLKGLT…AKLKGYNFDE (90 aa).

This sequence belongs to the NAD-dependent DNA ligase family. LigA subfamily. It depends on Mg(2+) as a cofactor. Requires Mn(2+) as cofactor.

It catalyses the reaction NAD(+) + (deoxyribonucleotide)n-3'-hydroxyl + 5'-phospho-(deoxyribonucleotide)m = (deoxyribonucleotide)n+m + AMP + beta-nicotinamide D-nucleotide.. Functionally, DNA ligase that catalyzes the formation of phosphodiester linkages between 5'-phosphoryl and 3'-hydroxyl groups in double-stranded DNA using NAD as a coenzyme and as the energy source for the reaction. It is essential for DNA replication and repair of damaged DNA. This chain is DNA ligase, found in Thermotoga neapolitana (strain ATCC 49049 / DSM 4359 / NBRC 107923 / NS-E).